The sequence spans 121 residues: ATP synthase epsilon chain (121 aa).

It belongs to the ATPase epsilon chain family. F-type ATPases have 2 components, CF(1) - the catalytic core - and CF(0) - the membrane proton channel. CF(1) has five subunits: alpha(3), beta(3), gamma(1), delta(1), epsilon(1). CF(0) has three main subunits: a, b and c.

Its subcellular location is the cell membrane. Functionally, produces ATP from ADP in the presence of a proton gradient across the membrane. The chain is ATP synthase epsilon chain from Mycobacterium marinum (strain ATCC BAA-535 / M).